Reading from the N-terminus, the 525-residue chain is CBL-interacting protein kinase 21 (525 aa).

In terms of domain architecture, Protein kinase spans 87 to 342 (YEMGRALGEG…ITGIRAHEWF (256 aa)). Residues 93-101 (LGEGHFGKV) and K116 contribute to the ATP site. D210 functions as the Proton acceptor in the catalytic mechanism. Residues 228–257 (DFGLSALPQNQRKDGLLHTTCGSPNYIAPE) are activation loop. The NAF domain occupies 372-401 (DIETSPAISQINAFQLIGMSSCLDLSGFFE). The interval 407–436 (ERKIRFVSNYSPTSLFEKIESTVTEKGFQV) is PPI.

The protein belongs to the protein kinase superfamily. CAMK Ser/Thr protein kinase family. SNF1 subfamily. Requires Mn(2+) as cofactor.

It carries out the reaction L-seryl-[protein] + ATP = O-phospho-L-seryl-[protein] + ADP + H(+). The enzyme catalyses L-threonyl-[protein] + ATP = O-phospho-L-threonyl-[protein] + ADP + H(+). CIPK serine-threonine protein kinases interact with CBL proteins. Binding of a CBL protein to the regulatory NAF domain of CIPK protein lead to the activation of the kinase in a calcium-dependent manner. The polypeptide is CBL-interacting protein kinase 21 (CIPK21) (Oryza sativa subsp. japonica (Rice)).